The primary structure comprises 189 residues: Xanthine phosphoribosyltransferase (189 aa).

Leu20 and Asn27 together coordinate xanthine. Residue 128-132 (ANGQA) participates in 5-phospho-alpha-D-ribose 1-diphosphate binding. Lys156 is a xanthine binding site.

It belongs to the purine/pyrimidine phosphoribosyltransferase family. Xpt subfamily. In terms of assembly, homodimer.

The protein localises to the cytoplasm. The catalysed reaction is XMP + diphosphate = xanthine + 5-phospho-alpha-D-ribose 1-diphosphate. The protein operates within purine metabolism; XMP biosynthesis via salvage pathway; XMP from xanthine: step 1/1. Functionally, converts the preformed base xanthine, a product of nucleic acid breakdown, to xanthosine 5'-monophosphate (XMP), so it can be reused for RNA or DNA synthesis. This is Xanthine phosphoribosyltransferase from Leuconostoc mesenteroides subsp. mesenteroides (strain ATCC 8293 / DSM 20343 / BCRC 11652 / CCM 1803 / JCM 6124 / NCDO 523 / NBRC 100496 / NCIMB 8023 / NCTC 12954 / NRRL B-1118 / 37Y).